The chain runs to 396 residues: Tryptophan synthase beta chain (396 aa).

Position 86 is an N6-(pyridoxal phosphate)lysine (Lys-86).

This sequence belongs to the TrpB family. As to quaternary structure, tetramer of two alpha and two beta chains. The cofactor is pyridoxal 5'-phosphate.

The enzyme catalyses (1S,2R)-1-C-(indol-3-yl)glycerol 3-phosphate + L-serine = D-glyceraldehyde 3-phosphate + L-tryptophan + H2O. It functions in the pathway amino-acid biosynthesis; L-tryptophan biosynthesis; L-tryptophan from chorismate: step 5/5. In terms of biological role, the beta subunit is responsible for the synthesis of L-tryptophan from indole and L-serine. This chain is Tryptophan synthase beta chain, found in Vibrio atlanticus (strain LGP32) (Vibrio splendidus (strain Mel32)).